We begin with the raw amino-acid sequence, 85 residues long: Colicin-E8 immunity protein in ColE6 (85 aa).

The protein belongs to the colicins ColE2/ColE8/ColE9 and pyocins S1/S2 family.

This is Colicin-E8 immunity protein in ColE6 (imm) from Escherichia coli.